The chain runs to 908 residues: Translation initiation factor IF-2 (908 aa).

2 disordered regions span residues 123 to 154 and 212 to 278; these read EEPPILQPELPTEEKEELEVIESPQAPQEELK and KKEP…VSEK. A tr-type G domain is found at 407-577; it reads ERAPIVTIMG…LFEAELLELK (171 aa). Residues 416–423 form a G1 region; it reads GHVDHGKT. 416 to 423 contributes to the GTP binding site; sequence GHVDHGKT. Residues 441-445 are G2; sequence GITQH. Positions 463–466 are G3; it reads DTPG. GTP contacts are provided by residues 463–467 and 517–520; these read DTPGH and NKMD. The segment at 517-520 is G4; the sequence is NKMD. The segment at 553-555 is G5; sequence SAI.

Belongs to the TRAFAC class translation factor GTPase superfamily. Classic translation factor GTPase family. IF-2 subfamily.

Its subcellular location is the cytoplasm. In terms of biological role, one of the essential components for the initiation of protein synthesis. Protects formylmethionyl-tRNA from spontaneous hydrolysis and promotes its binding to the 30S ribosomal subunits. Also involved in the hydrolysis of GTP during the formation of the 70S ribosomal complex. The polypeptide is Translation initiation factor IF-2 (Amoebophilus asiaticus (strain 5a2)).